Reading from the N-terminus, the 203-residue chain is GTP-binding protein rho4 (203 aa).

Residue 21–28 (GDGGCGKT) coordinates GTP. The Effector region motif lies at 43-51 (YVPTVFENY). 70–74 (DTAGQ) is a binding site for GTP. A Cysteine methyl ester modification is found at Cys-200. Cys-200 carries the S-geranylgeranyl cysteine lipid modification. The propeptide at 201–203 (VIL) is removed in mature form.

This sequence belongs to the small GTPase superfamily. Rho family.

The protein localises to the membrane. Required for cell separation. Involved in the regulation of the septum degradation during cytokinesis and in the organization of F-actin patches and cytoplasmic microtubules. The protein is GTP-binding protein rho4 (rho4) of Schizosaccharomyces pombe (strain 972 / ATCC 24843) (Fission yeast).